We begin with the raw amino-acid sequence, 467 residues long: GTPase Obg (467 aa).

Positions M1–L158 constitute an Obg domain. The OBG-type G domain maps to A159–Q333. GTP contacts are provided by residues G165 to S172, F190 to E194, D214 to G217, N285 to D288, and S314 to A316. The Mg(2+) site is built by S172 and T192. Residues T352–P430 form the OCT domain.

This sequence belongs to the TRAFAC class OBG-HflX-like GTPase superfamily. OBG GTPase family. Monomer. Requires Mg(2+) as cofactor.

The protein resides in the cytoplasm. Functionally, an essential GTPase which binds GTP, GDP and possibly (p)ppGpp with moderate affinity, with high nucleotide exchange rates and a fairly low GTP hydrolysis rate. Plays a role in control of the cell cycle, stress response, ribosome biogenesis and in those bacteria that undergo differentiation, in morphogenesis control. This is GTPase Obg from Thermomicrobium roseum (strain ATCC 27502 / DSM 5159 / P-2).